The chain runs to 142 residues: ATP synthase epsilon chain (142 aa).

This sequence belongs to the ATPase epsilon chain family. F-type ATPases have 2 components, CF(1) - the catalytic core - and CF(0) - the membrane proton channel. CF(1) has five subunits: alpha(3), beta(3), gamma(1), delta(1), epsilon(1). CF(0) has three main subunits: a, b and c.

It localises to the cell inner membrane. In terms of biological role, produces ATP from ADP in the presence of a proton gradient across the membrane. This Coxiella burnetii (strain CbuK_Q154) (Coxiella burnetii (strain Q154)) protein is ATP synthase epsilon chain.